Here is a 619-residue protein sequence, read N- to C-terminus: Dihydroxy-acid dehydratase 1 (619 aa).

Asp81 lines the Mg(2+) pocket. Cys122 contacts [2Fe-2S] cluster. Mg(2+) is bound by residues Asp123 and Lys124. Lys124 is modified (N6-carboxylysine). Cys198 contributes to the [2Fe-2S] cluster binding site. Residue Glu494 participates in Mg(2+) binding. Ser520 functions as the Proton acceptor in the catalytic mechanism.

Belongs to the IlvD/Edd family. Homodimer. [2Fe-2S] cluster is required as a cofactor. The cofactor is Mg(2+).

The enzyme catalyses (2R)-2,3-dihydroxy-3-methylbutanoate = 3-methyl-2-oxobutanoate + H2O. The catalysed reaction is (2R,3R)-2,3-dihydroxy-3-methylpentanoate = (S)-3-methyl-2-oxopentanoate + H2O. The protein operates within amino-acid biosynthesis; L-isoleucine biosynthesis; L-isoleucine from 2-oxobutanoate: step 3/4. It functions in the pathway amino-acid biosynthesis; L-valine biosynthesis; L-valine from pyruvate: step 3/4. Its function is as follows. Functions in the biosynthesis of branched-chain amino acids. Catalyzes the dehydration of (2R,3R)-2,3-dihydroxy-3-methylpentanoate (2,3-dihydroxy-3-methylvalerate) into 2-oxo-3-methylpentanoate (2-oxo-3-methylvalerate) and of (2R)-2,3-dihydroxy-3-methylbutanoate (2,3-dihydroxyisovalerate) into 2-oxo-3-methylbutanoate (2-oxoisovalerate), the penultimate precursor to L-isoleucine and L-valine, respectively. The protein is Dihydroxy-acid dehydratase 1 of Bordetella bronchiseptica (strain ATCC BAA-588 / NCTC 13252 / RB50) (Alcaligenes bronchisepticus).